The primary structure comprises 127 residues: Trefoil factor 2 (127 aa).

Positions 1 to 21 (EPQRPAPGHPPPAGAVCLTGA) are cleaved as a signal peptide. Pyrrolidone carboxylic acid is present on Q22. P-type domains follow at residues 27-71 (CRCS…FKPL) and 77-120 (EECV…FFPM). Disulfide bonds link C27–C125, C29–C56, C40–C55, C50–C67, C79–C105, C89–C104, and C99–C116.

In terms of tissue distribution, found in pancreas.

Its subcellular location is the secreted. Its function is as follows. Inhibits gastrointestinal motility and gastric acid secretion. Could function as a structural component of gastric mucus, possibly by stabilizing glycoproteins in the mucus gel through interactions with carbohydrate side chains. The chain is Trefoil factor 2 (TFF2) from Sus scrofa (Pig).